Here is a 312-residue protein sequence, read N- to C-terminus: MRLVFAGTPETALPALHQLIDSPRHDVIAVLTRPDAASGRRGKPEPSPVARAALERGIPVLRPSRPNSAEFVAELSELAPQCCAVVAYGALLGDALLGVPPQGWVNLHFSLLPAWRGAAPVQAAIAAGDAVTGATTFQIEPSLDSGPVYGVVTETIRPTDTAGDLLGRLAVSGAELLSATLDGIAEGALTARPQPADGVTLAPKISVEQARVRWELPVPIIERRIRAVTPNPGAWTLIGDLRVKLGPVYLDAAVEPPGPLPPGAIQVDRKHVWVGTGSEPLRLGQVQPPGKKLMNAADWARGARLDPSVRAS.

A (6S)-5,6,7,8-tetrahydrofolate-binding site is contributed by 110–113 (SLLP).

Belongs to the Fmt family.

It catalyses the reaction L-methionyl-tRNA(fMet) + (6R)-10-formyltetrahydrofolate = N-formyl-L-methionyl-tRNA(fMet) + (6S)-5,6,7,8-tetrahydrofolate + H(+). Attaches a formyl group to the free amino group of methionyl-tRNA(fMet). The formyl group appears to play a dual role in the initiator identity of N-formylmethionyl-tRNA by promoting its recognition by IF2 and preventing the misappropriation of this tRNA by the elongation apparatus. The sequence is that of Methionyl-tRNA formyltransferase from Mycobacterium ulcerans (strain Agy99).